The following is a 306-amino-acid chain: Curved DNA-binding protein (306 aa).

The 65-residue stretch at Asp-5–Trp-69 folds into the J domain.

Its subcellular location is the cytoplasm. The protein localises to the nucleoid. DNA-binding protein that preferentially recognizes a curved DNA sequence. It is probably a functional analog of DnaJ; displays overlapping activities with DnaJ, but functions under different conditions, probably acting as a molecular chaperone in an adaptive response to environmental stresses other than heat shock. Lacks autonomous chaperone activity; binds native substrates and targets them for recognition by DnaK. Its activity is inhibited by the binding of CbpM. The protein is Curved DNA-binding protein of Escherichia coli O8 (strain IAI1).